Reading from the N-terminus, the 461-residue chain is Putative ankyrin repeat protein FPV218 (461 aa).

ANK repeat units lie at residues 1 to 28, 31 to 61, 65 to 94, 96 to 116, 120 to 149, 153 to 182, 186 to 213, 217 to 248, 250 to 277, 281 to 312, 358 to 385, and 431 to 460; these read MLSLYYAINYKNRKMVERLLREGVHPDS, KGFYRPLVKSILLRDVDLVSILLQNGANPNN, ETVSPLAIAIKVNSPTIVSLLLDYNADTSL, PLYVSFPIIKVLVYHGIDVNV, ESRSFLHYAAKNDDVDTVISLILHGANVNV, KGLSPLHHAVSKKTTLTAKILLENGARVNI, LGRLPLHLGANTYEMVKLLIDYGSPIDI, NGSTPLHYAIWKSSLDTIRLLVNVSTINALDN, CNSPLHYIILSETEILVELLLRGADITI, CGNTPLDILCKLRIKKLDNIKAIISNAFLMRE, NGPTILDVCTDKVHFLHRLVNARDNVQY, and LPYELKHYIIEYINIEFIKSLLEHTNLKNK.

This Fowlpox virus (strain NVSL) (FPV) protein is Putative ankyrin repeat protein FPV218.